Reading from the N-terminus, the 189-residue chain is Small ribosomal subunit protein uS5 (189 aa).

The 64-residue stretch at 22–85 (FVDKLVAINR…ESAKRDLIFV (64 aa)) folds into the S5 DRBM domain.

This sequence belongs to the universal ribosomal protein uS5 family. As to quaternary structure, part of the 30S ribosomal subunit. Contacts proteins S4 and S8.

In terms of biological role, with S4 and S12 plays an important role in translational accuracy. Located at the back of the 30S subunit body where it stabilizes the conformation of the head with respect to the body. The chain is Small ribosomal subunit protein uS5 from Agrobacterium fabrum (strain C58 / ATCC 33970) (Agrobacterium tumefaciens (strain C58)).